Here is a 447-residue protein sequence, read N- to C-terminus: Putative branched-chain amino acid carrier protein SE_1090 (447 aa).

The next 12 membrane-spanning stretches (helical) occupy residues 5 to 25, 40 to 60, 74 to 94, 114 to 134, 143 to 163, 193 to 213, 229 to 249, 290 to 310, 317 to 337, 350 to 370, 382 to 402, and 417 to 437; these read TWII…LIFP, ILAF…VGAL, PRFS…LFAI, GNLA…YLCL, IGSL…IKGF, GYLT…VNAI, IIAG…LGYI, LLGI…IVSV, ILPK…SFIL, VPVL…ILIA, IPLI…QGWI, and LEWF…SYFV.

It belongs to the branched chain amino acid transporter family.

Its subcellular location is the cell membrane. Its function is as follows. Component of the transport system for branched-chain amino acids (leucine, isoleucine and valine), which is coupled to a proton motive force. The sequence is that of Putative branched-chain amino acid carrier protein SE_1090 from Staphylococcus epidermidis (strain ATCC 12228 / FDA PCI 1200).